Here is a 332-residue protein sequence, read N- to C-terminus: Holliday junction branch migration complex subunit RuvB (332 aa).

The large ATPase domain (RuvB-L) stretch occupies residues 1–181; that stretch reads MARILDNDVM…FGITGHMEYY (181 aa). ATP is bound by residues L20, R21, G62, K65, T66, T67, 128-130, R171, Y181, and R218; that span reads EDF. A Mg(2+)-binding site is contributed by T66. Residues 182–252 are small ATPAse domain (RuvB-S); it reads QEKDLTEIVE…ITDRALTMLD (71 aa). A head domain (RuvB-H) region spans residues 255 to 332; it reads REGLDYIDQK…RHLGYPYQNT (78 aa). R291, R310, R312, and R315 together coordinate DNA.

Belongs to the RuvB family. As to quaternary structure, homohexamer. Forms an RuvA(8)-RuvB(12)-Holliday junction (HJ) complex. HJ DNA is sandwiched between 2 RuvA tetramers; dsDNA enters through RuvA and exits via RuvB. An RuvB hexamer assembles on each DNA strand where it exits the tetramer. Each RuvB hexamer is contacted by two RuvA subunits (via domain III) on 2 adjacent RuvB subunits; this complex drives branch migration. In the full resolvosome a probable DNA-RuvA(4)-RuvB(12)-RuvC(2) complex forms which resolves the HJ.

The protein resides in the cytoplasm. The enzyme catalyses ATP + H2O = ADP + phosphate + H(+). The RuvA-RuvB-RuvC complex processes Holliday junction (HJ) DNA during genetic recombination and DNA repair, while the RuvA-RuvB complex plays an important role in the rescue of blocked DNA replication forks via replication fork reversal (RFR). RuvA specifically binds to HJ cruciform DNA, conferring on it an open structure. The RuvB hexamer acts as an ATP-dependent pump, pulling dsDNA into and through the RuvAB complex. RuvB forms 2 homohexamers on either side of HJ DNA bound by 1 or 2 RuvA tetramers; 4 subunits per hexamer contact DNA at a time. Coordinated motions by a converter formed by DNA-disengaged RuvB subunits stimulates ATP hydrolysis and nucleotide exchange. Immobilization of the converter enables RuvB to convert the ATP-contained energy into a lever motion, pulling 2 nucleotides of DNA out of the RuvA tetramer per ATP hydrolyzed, thus driving DNA branch migration. The RuvB motors rotate together with the DNA substrate, which together with the progressing nucleotide cycle form the mechanistic basis for DNA recombination by continuous HJ branch migration. Branch migration allows RuvC to scan DNA until it finds its consensus sequence, where it cleaves and resolves cruciform DNA. This chain is Holliday junction branch migration complex subunit RuvB, found in Streptococcus pyogenes serotype M12 (strain MGAS9429).